Here is a 991-residue protein sequence, read N- to C-terminus: Translation initiation factor IF-2 (991 aa).

Disordered regions lie at residues 53-85 (SHGT…KART), 97-175 (VKRD…EAAE), and 312-395 (GIKG…DRGG). 2 stretches are compositionally biased toward basic and acidic residues: residues 97-113 (VKRD…HDSQ) and 125-175 (ELQR…EAAE). Positions 323–338 (AAGAPAPGAAPGAAAK) are enriched in low complexity. Basic and acidic residues predominate over residues 339-349 (PGEKKSVKSEK). The 168-residue stretch at 491 to 658 (PRPPVVTVMG…QVLLQAEVLE (168 aa)) folds into the tr-type G domain. Residues 500–507 (GHVDHGKT) form a G1 region. A GTP-binding site is contributed by 500-507 (GHVDHGKT). A G2 region spans residues 525-529 (GITQH). The G3 stretch occupies residues 546–549 (DTPG). GTP-binding positions include 546–550 (DTPGH) and 600–603 (NKID). A G4 region spans residues 600 to 603 (NKID). Residues 636–638 (SAK) form a G5 region.

Belongs to the TRAFAC class translation factor GTPase superfamily. Classic translation factor GTPase family. IF-2 subfamily.

It is found in the cytoplasm. One of the essential components for the initiation of protein synthesis. Protects formylmethionyl-tRNA from spontaneous hydrolysis and promotes its binding to the 30S ribosomal subunits. Also involved in the hydrolysis of GTP during the formation of the 70S ribosomal complex. The chain is Translation initiation factor IF-2 from Leptothrix cholodnii (strain ATCC 51168 / LMG 8142 / SP-6) (Leptothrix discophora (strain SP-6)).